We begin with the raw amino-acid sequence, 445 residues long: Tubulin alpha-3 chain (445 aa).

GTP is bound by residues Q11, E72, S141, G145, T146, T180, N207, and N229. E72 provides a ligand contact to Mg(2+). E255 is an active-site residue.

Belongs to the tubulin family. Dimer of alpha and beta chains. A typical microtubule is a hollow water-filled tube with an outer diameter of 25 nm and an inner diameter of 15 nM. Alpha-beta heterodimers associate head-to-tail to form protofilaments running lengthwise along the microtubule wall with the beta-tubulin subunit facing the microtubule plus end conferring a structural polarity. Microtubules usually have 13 protofilaments but different protofilament numbers can be found in some organisms and specialized cells. Interacts with NUM1. Mg(2+) is required as a cofactor.

It is found in the cytoplasm. The protein resides in the cytoskeleton. The enzyme catalyses GTP + H2O = GDP + phosphate + H(+). Functionally, tubulin is the major constituent of microtubules, a cylinder consisting of laterally associated linear protofilaments composed of alpha- and beta-tubulin heterodimers. Microtubules grow by the addition of GTP-tubulin dimers to the microtubule end, where a stabilizing cap forms. Below the cap, tubulin dimers are in GDP-bound state, owing to GTPase activity of alpha-tubulin. This Saccharomyces cerevisiae (strain ATCC 204508 / S288c) (Baker's yeast) protein is Tubulin alpha-3 chain (TUB3).